The following is an 804-amino-acid chain: MDDELLELQRQFEFAQQVKSSVRLSDRNVVELVQKLQELGVIDFDLLHTVTGKEYITQEQLRNEITREISKLGRVSVIDLADTIGVDLYHVEKQAQDVVLNDPGLMLVQGEIISQSYWDSIAEEINERLQECSQIAVAELAGQLQVGSELVQSVLEPRLGTLVKARLEGGQLYTPAYVERVTAMVRGASRGIFVPSNLSALWAPLQQLVQETNGASGVAVENSFFQSIFNRLLKEEEMLGSLRAGTHWTPSAFATAQKECVDSSFSQNSYISYESMQKLGISQAVQFLQSRYPDGTPLAAVFIHSSMIEMLDSATEDAIEQNSWIDSLSVLPSSFTSQDANKMLLLCPSVQSALKAEKALILGESYVLSSGFIKGIYDQIEKEADAFSIQASTATLIHPSSKSSESTESIPANTDKGSKKKKGKSASTKAATVETVPDDEEDARPKSKRNQKKGRDSSSSQKLDSKAGGKKESVKAQESNNIIPPDEWVMKKIVDSVPEFEDDGTENPDSILKHLADHMKPMLINSLKERRKKIFTENADRMRRLIDDLQKKLDESFLNMQLYEKALDLFEDDQSTAVVLHRHLLRTTAATIADTLLHGLDIHNKMKNGTEVEESKTQDLVLLDSSERTALAKNLNGSLSKKALALVEALEGKRVDTFMVTFRDLAEESGLVLKKLDKKLERTLLHSYRKDLISQVSTESDPIALLAKVVSLLFIKIHNKALQAPGRAIAAAISHLKEKLDESAYKTLTDYQTATVTLLALMSASSGEEHDCSADRILTKRELLESQMPLLRTLVLGDSQPQQS.

Met1 carries the N-acetylmethionine modification. The disordered stretch occupies residues 397–483; the sequence is IHPSSKSSES…VKAQESNNII (87 aa). The span at 400-409 shows a compositional bias: low complexity; that stretch reads SSKSSESTES. Basic and acidic residues predominate over residues 463–475; that stretch reads LDSKAGGKKESVK.

This sequence belongs to the UFL1 family.

In terms of biological role, E3 UFM1-protein ligase that mediates ufmylation of target proteins. The chain is E3 UFM1-protein ligase 1 homolog from Arabidopsis thaliana (Mouse-ear cress).